We begin with the raw amino-acid sequence, 91 residues long: Small ribosomal subunit protein bS16 (91 aa).

This sequence belongs to the bacterial ribosomal protein bS16 family. Part of the 30S ribosomal subunit.

In terms of biological role, binds to the lower part of the body of the 30S subunit, where it stabilizes two of its domains. The polypeptide is Small ribosomal subunit protein bS16 (Thermus thermophilus).